Here is a 560-residue protein sequence, read N- to C-terminus: MQAPNIYPFSQTQPQALPGFTYGPPQLVFDHSAPRVDPLHSTVTINSPLPLQHYNGPNAHINSANNNYAYYYHHPNNNDNNNHSNNTIKNNNINSVLPAVNIQISNNSHYRNTHQIPSAPQRLVSIIPDPHMPPNISHFQLNNIHPQMHAPVATDIHFQQVPVYNKTNNGIGTDNINNDKPVNSNQNEVLDNIDERSCHEINRVVSFSKHFENNELTTTANDLNIQSTMDELAKLKSLSNSTHFRQSIATQNFHSLQNHITTIENRLASLLTDRQQEQQQLKQQESEKESSSPFSNKIKLPSLQELTDSISTQHLPTFYDNKRHASDTDLKSSTLHGPLYHRHAFLSTSSSSPSPTAGSAPLQKLQVPRQDDPNDKKMNISSSPFNSITYIPNTTLSPMVQTQLKNLTTSNLNTKKKNNRGRPRAIQRQPTLTTSSHFINNSNPGAAAVSTTTPAANSDEKNPNAKKIIEFCFHCGETETPEWRKGPYGTRTLCNACGLFYRKVTKKFGSKSSNLLLRYRRSIDLANDRRIPDFITIPNRFIHDMDNDQTLDSEYNTILQ.

Disordered stretches follow at residues 274-297, 345-383, and 412-461; these read RQQEQQQLKQQESEKESSSPFSNK, FLSTSSSSPSPTAGSAPLQKLQVPRQDDPNDKKMNISSS, and LNTK…SDEK. Over residues 347 to 361 the composition is skewed to low complexity; the sequence is STSSSSPSPTAGSAP. Basic and acidic residues predominate over residues 369-378; the sequence is RQDDPNDKKM. Positions 414–425 are enriched in basic residues; sequence TKKKNNRGRPRA. Over residues 428–456 the composition is skewed to polar residues; that stretch reads RQPTLTTSSHFINNSNPGAAAVSTTTPAA. The GATA-type zinc finger occupies 472-497; the sequence is CFHCGETETPEWRKGPYGTRTLCNAC.

The protein is Protein GAT2 (GAT2) of Saccharomyces cerevisiae (strain ATCC 204508 / S288c) (Baker's yeast).